Consider the following 432-residue polypeptide: Glutamyl-tRNA reductase (432 aa).

Substrate is bound by residues 55–58, Ser114, 119–121, and Gln125; these read TCNR and ETQ. Cys56 functions as the Nucleophile in the catalytic mechanism. Residue 194-199 coordinates NADP(+); it reads GAGEMI.

This sequence belongs to the glutamyl-tRNA reductase family. Homodimer.

It carries out the reaction (S)-4-amino-5-oxopentanoate + tRNA(Glu) + NADP(+) = L-glutamyl-tRNA(Glu) + NADPH + H(+). It functions in the pathway porphyrin-containing compound metabolism; protoporphyrin-IX biosynthesis; 5-aminolevulinate from L-glutamyl-tRNA(Glu): step 1/2. Catalyzes the NADPH-dependent reduction of glutamyl-tRNA(Glu) to glutamate 1-semialdehyde (GSA). The sequence is that of Glutamyl-tRNA reductase from Burkholderia cenocepacia (strain ATCC BAA-245 / DSM 16553 / LMG 16656 / NCTC 13227 / J2315 / CF5610) (Burkholderia cepacia (strain J2315)).